A 149-amino-acid polypeptide reads, in one-letter code: 3-dehydroquinate dehydratase (149 aa).

Residue Tyr-23 is the Proton acceptor of the active site. Positions 74, 80, and 87 each coordinate substrate. His-100 (proton donor) is an active-site residue. Substrate contacts are provided by residues 101-102 and Arg-111; that span reads LS.

It belongs to the type-II 3-dehydroquinase family. As to quaternary structure, homododecamer.

The enzyme catalyses 3-dehydroquinate = 3-dehydroshikimate + H2O. It participates in metabolic intermediate biosynthesis; chorismate biosynthesis; chorismate from D-erythrose 4-phosphate and phosphoenolpyruvate: step 3/7. Its function is as follows. Catalyzes a trans-dehydration via an enolate intermediate. This chain is 3-dehydroquinate dehydratase, found in Ruegeria pomeroyi (strain ATCC 700808 / DSM 15171 / DSS-3) (Silicibacter pomeroyi).